We begin with the raw amino-acid sequence, 206 residues long: Large ribosomal subunit protein uL4 (206 aa).

It belongs to the universal ribosomal protein uL4 family. Part of the 50S ribosomal subunit.

In terms of biological role, one of the primary rRNA binding proteins, this protein initially binds near the 5'-end of the 23S rRNA. It is important during the early stages of 50S assembly. It makes multiple contacts with different domains of the 23S rRNA in the assembled 50S subunit and ribosome. Its function is as follows. Forms part of the polypeptide exit tunnel. The chain is Large ribosomal subunit protein uL4 from Xanthobacter autotrophicus (strain ATCC BAA-1158 / Py2).